Reading from the N-terminus, the 180-residue chain is Free methionine-R-sulfoxide reductase (180 aa).

The 79-residue stretch at 99 to 177 (GVCGTAASTK…KLAKLINKSC (79 aa)) folds into the GAF domain.

The protein belongs to the free Met sulfoxide reductase family.

It is found in the cytoplasm. The protein localises to the nucleus. The enzyme catalyses [thioredoxin]-disulfide + L-methionine + H2O = L-methionine (R)-S-oxide + [thioredoxin]-dithiol. In terms of biological role, catalyzes the reversible oxidation-reduction of the R-enantiomer of free methionine sulfoxide to methionine. Does not act on S-enantiomer of free methionine sulfoxide or R-enantiomer of dabsylated methionine sulfoxide. Involved in protection against oxidative stress. The sequence is that of Free methionine-R-sulfoxide reductase from Saccharomyces cerevisiae (strain ATCC 204508 / S288c) (Baker's yeast).